Consider the following 189-residue polypeptide: Accessory gene regulator protein B (189 aa).

5 consecutive transmembrane segments (helical) span residues 50–70 (VSLL…FFFI), 83–103 (LLCY…VGYV), 105–125 (VSSL…SIYA), 143–163 (KIKA…LNEP), and 164–184 (YQQL…PIFF).

It belongs to the AgrB family.

It localises to the cell membrane. Essential for the production of a quorum sensing system signal molecule, the autoinducing peptide (AIP). This quorum sensing system is responsible for the regulation of the expression of virulence factor genes. Involved in the proteolytic processing of AgrD, the precursor of AIP. This chain is Accessory gene regulator protein B, found in Staphylococcus saprophyticus subsp. saprophyticus (strain ATCC 15305 / DSM 20229 / NCIMB 8711 / NCTC 7292 / S-41).